A 78-amino-acid chain; its full sequence is Large ribosomal subunit protein bL28 (78 aa).

This sequence belongs to the bacterial ribosomal protein bL28 family.

The sequence is that of Large ribosomal subunit protein bL28 from Acaryochloris marina (strain MBIC 11017).